A 239-amino-acid polypeptide reads, in one-letter code: 1-(5-phosphoribosyl)-5-[(5-phosphoribosylamino)methylideneamino] imidazole-4-carboxamide isomerase (239 aa).

The active-site Proton acceptor is the Asp-8. Asp-129 (proton donor) is an active-site residue.

Belongs to the HisA/HisF family.

Its subcellular location is the cytoplasm. It catalyses the reaction 1-(5-phospho-beta-D-ribosyl)-5-[(5-phospho-beta-D-ribosylamino)methylideneamino]imidazole-4-carboxamide = 5-[(5-phospho-1-deoxy-D-ribulos-1-ylimino)methylamino]-1-(5-phospho-beta-D-ribosyl)imidazole-4-carboxamide. The protein operates within amino-acid biosynthesis; L-histidine biosynthesis; L-histidine from 5-phospho-alpha-D-ribose 1-diphosphate: step 4/9. The sequence is that of 1-(5-phosphoribosyl)-5-[(5-phosphoribosylamino)methylideneamino] imidazole-4-carboxamide isomerase from Legionella pneumophila (strain Paris).